Consider the following 151-residue polypeptide: Transcriptional regulator MraZ (151 aa).

SpoVT-AbrB domains are found at residues 5–52 and 81–124; these read ATAV…PLDE and ATEC…SDVE.

Belongs to the MraZ family. Forms oligomers.

It localises to the cytoplasm. The protein resides in the nucleoid. In Haemophilus influenzae (strain 86-028NP), this protein is Transcriptional regulator MraZ.